The chain runs to 300 residues: Protoheme IX farnesyltransferase (300 aa).

The next 9 helical transmembrane spans lie at 26 to 46 (VVQL…PGLP), 54 to 74 (IAWA…FNCI), 102 to 122 (LLFS…LVNP), 123 to 143 (LTMW…TLIL), 150 to 170 (NIVI…AAMT), 177 to 197 (ALIL…ALAL), 224 to 244 (VLLY…YGMS), 246 to 266 (WPYL…GFAL), and 279 to 299 (FRFS…DHYL).

This sequence belongs to the UbiA prenyltransferase family. Protoheme IX farnesyltransferase subfamily.

The protein resides in the cell inner membrane. It carries out the reaction heme b + (2E,6E)-farnesyl diphosphate + H2O = Fe(II)-heme o + diphosphate. It participates in porphyrin-containing compound metabolism; heme O biosynthesis; heme O from protoheme: step 1/1. Its function is as follows. Converts heme B (protoheme IX) to heme O by substitution of the vinyl group on carbon 2 of heme B porphyrin ring with a hydroxyethyl farnesyl side group. In Verminephrobacter eiseniae (strain EF01-2), this protein is Protoheme IX farnesyltransferase.